Reading from the N-terminus, the 150-residue chain is Transcriptional regulator MraZ (150 aa).

2 SpoVT-AbrB domains span residues 11-53 (TYTP…PFDE) and 82-125 (AVDQ…NKDT).

This sequence belongs to the MraZ family. As to quaternary structure, forms oligomers.

The protein localises to the cytoplasm. It is found in the nucleoid. The sequence is that of Transcriptional regulator MraZ from Bifidobacterium longum (strain NCC 2705).